Consider the following 370-residue polypeptide: Popeye domain-containing 2 (370 aa).

2 helical membrane-spanning segments follow: residues 51–71 (ALYI…WGWL) and 78–98 (VFIW…HLIF). The tract at residues 275-349 (PSPPGSEGGS…SGEDSTSLIL (75 aa)) is disordered. Positions 283–294 (GSASSPPRGSLG) are enriched in low complexity. Polar residues-rich tracts occupy residues 307–319 (NPGS…QPDQ) and 330–347 (QHWS…STSL).

It belongs to the popeye family. As to expression, expressed in the heart and, slightly, in skeletal muscle.

It localises to the membrane. The protein resides in the cell membrane. Its subcellular location is the sarcolemma. Functionally, important for striated muscle differentiation and cardiac morphogenesis. Is also required for cardiac conduction system development, plays a regulatory function in heart rate dynamics mediated, at least in part, through cAMP-binding. This chain is Popeye domain-containing 2, found in Danio rerio (Zebrafish).